The primary structure comprises 142 residues: Probable transport accessory protein MmpS1 (142 aa).

Transmembrane regions (helical) follow at residues 8–28 and 81–101; these read FWIP…VSRL and VVNA…AVVA.

It belongs to the MmpS family.

The protein localises to the cell membrane. The sequence is that of Probable transport accessory protein MmpS1 (mmpS1) from Mycobacterium bovis (strain ATCC BAA-935 / AF2122/97).